Here is a 160-residue protein sequence, read N- to C-terminus: uncharacterized protein (160 aa).

A run of 4 helical transmembrane segments spans residues 7–27, 48–68, 95–115, and 121–141; these read IFLKIALVLIGIPILALCIFL, LVFIYLYVTAIPFYFALYQAF, AVTISIFYAAGMPVFYLMAEI, and IIVIGLVIIFASMVIAVFAAV.

The protein localises to the cell membrane. This is an uncharacterized protein from Bacillus subtilis (strain 168).